We begin with the raw amino-acid sequence, 579 residues long: Probable cytochrome c oxidase subunit 1-alpha (579 aa).

A disordered region spans residues 1 to 21; the sequence is MSILNEPQGAAAAEDSYENEL. A helical transmembrane segment spans residues 44-64; that stretch reads IGTLYLVTSFAFFCIGGVMAL. H90 serves as a coordination point for Fe(II)-heme a. Helical transmembrane passes span 93–113, 125–145, 174–194, 217–237, 262–282, and 295–315; these read IMLLMFATPLFAGFANWIMPL, LNMFAYWLYLFGSLIAVGGFL, MWIMGLAFSGFGTILGSVNFI, VLLTGVLVLLAFPVLAAALFA, LFWFFGHPEVYIIALPFFGII, and FGYMGLIGATIAIAGLSVTVW. The Cu cation site is built by H268 and Y272. Positions 268 to 272 form a cross-link, 1'-histidyl-3'-tyrosine (His-Tyr); it reads HPEVY. H317 and H318 together coordinate Cu cation. 5 helical membrane-spanning segments follow: residues 319–339, 363–383, 397–417, 437–457, and 480–500; these read MYVTGGVLLPFFSFMTFLIAV, MLWATGFLITFTFGGLTGVIL, FVVAHFHYVVFGTVVFAMFSG, ITFWTLFVGFHGTFLIQHWLG, and ISTICSFLLGLSILPFLYNVW. H401 serves as a coordination point for heme a3. H403 contributes to the Fe(II)-heme a binding site.

The protein belongs to the heme-copper respiratory oxidase family. In terms of assembly, associates with subunits II, III and IV to form cytochrome c oxidase. The cofactor is Cu(2+). Requires heme as cofactor.

It is found in the cell membrane. The catalysed reaction is 4 Fe(II)-[cytochrome c] + O2 + 8 H(+)(in) = 4 Fe(III)-[cytochrome c] + 2 H2O + 4 H(+)(out). The protein operates within energy metabolism; oxidative phosphorylation. Its function is as follows. Cytochrome c oxidase is the component of the respiratory chain that catalyzes the reduction of oxygen to water. Subunits 1-3 form the functional core of the enzyme complex. CO I is the catalytic subunit of the enzyme. Electrons originating in cytochrome c are transferred via the copper A center of subunit 2 and heme A of subunit 1 to the bimetallic center formed by heme A3 and copper B. This Streptomyces avermitilis (strain ATCC 31267 / DSM 46492 / JCM 5070 / NBRC 14893 / NCIMB 12804 / NRRL 8165 / MA-4680) protein is Probable cytochrome c oxidase subunit 1-alpha (ctaD1).